Reading from the N-terminus, the 1173-residue chain is MDTKEGSPHVWPTSVEHQSNTAQVHFVPDGGSVAQIVYSDDQDRAQQQVVYTADASSFTSVDASEHTLVYIHPVDGSQTLFTDQPQVAYVQQDATTQQVTVLLPAAQSMNAANLAVLSGVSESAQTMSLDPVSQINRASLTVHDHRLPPMEGADSSTTINSLPSPNAHSDGKEDDDDDDDDDDDEEEEDDDGEDSDLDDWEAEPPRPFDPNDLWCEECNNAHPSVCPKHGALHPIPNRPVLTRARASLPLVLYIDRFLGGVYSKRRIPKRTQFGPLEGPLVKKTELKDSYIHLKVALNSPVDSEGAFQEDLWFELSEESLCNWMMFVRPAQNHLEQNLVAYQYGQHIYFTTIKNIEPKQELKVWYAASYAEFVNEKIHDITQEERKVLREQEKNWPCYECNRRFMSSEQLQQHLNSHDEKLDFISRTKPRGRTRTRRKFGPGRRPGRPPKFLRFDISSENREKIDLGTQDLLQFHNKGPHFEDCGHSTLNGLEQSELTLGTSTQGTPNQQQATQLLPPNEISTPVATTSILTAEDMRRAKRIRNAALQHLFIRKSFRPFKCLQCGKAFREKEKLDQHLRFHGRDGNYPLTCDICNKGFISTSSLENHMKFHLDQKTYSCIFCPESFDRLDLLKDHVVVHIIDGCFSCPTCKKRFTDFIQVKKHVRSFHSEKIYQCTECDKAFCRPDKLRLHMLRHSDRKDFLCSTCGKQFKRKDKLREHMQRMHNPEREAKKADRTGRAKAFKPRLASTDYESFMFKCRVCMMGFRRRGMLVNHLSKRHPEMKIDEVPELTLPIIKPNRDYYCQYCEKVYKSASKRKAHILKNHPGAELPPSIRKLRPAGPGEPDPMLSTHTQLTGTIATPPVCCPHCSKQYSSKTKMVQHIRKKHPEFSLLPISVQAPVLGTAPAVLTADGTSGETVVTTDLLTQAMTELSQTLTTEYRTPQGDFQRIQYIPVSQTTGGMQQPQHIQLQVVQVAQAQSPNQSQHSTVDMGQLHESQGYMQHAIQVQHIQVAEPTSGTQSTPQVGGQALSPSSQEAEEVNPSQLQTPASQAQANSAVQHAYLPSGWNSFRGYPSEIQMMALPQGQYVIAEAAVGTPVTPVSSGQVKAVTQTHYVISEGQGVLDMKKSSSLAEEATPNPDHMEQPASNSSQTTQYIITTTTNMNGSSEVHISKP.

The segment at 146–211 is disordered; the sequence is RLPPMEGADS…AEPPRPFDPN (66 aa). Residues 154–167 are compositionally biased toward polar residues; it reads DSSTTINSLPSPNA. Residues 172-202 show a composition bias toward acidic residues; sequence KEDDDDDDDDDDDEEEEDDDGEDSDLDDWEA. An SET domain is found at 248–366; sequence LPLVLYIDRF…PKQELKVWYA (119 aa). Residues 267 to 371 are N-terminal PR domain; essential for transcriptional activator activity; it reads IPKRTQFGPL…KVWYAASYAE (105 aa). The C2H2-type 1 zinc-finger motif lies at 395–417; it reads WPCYECNRRFMSSEQLQQHLNSH. Over residues 430-447 the composition is skewed to basic residues; the sequence is RGRTRTRRKFGPGRRPGR. The interval 430–451 is disordered; sequence RGRTRTRRKFGPGRRPGRPPKF. 9 C2H2-type zinc fingers span residues 559–581, 589–611, 617–639, 645–668, 673–695, 701–724, 756–779, 801–824, and 863–886; these read FKCL…LRFH, LTCD…MKFH, YSCI…VVVH, FSCP…RSFH, YQCT…MLRH, FLCS…QRMH, FKCR…SKRH, YYCQ…LKNH, and VCCP…RKKH. The C-terminal glutamine-rich region; essential for transcriptional activator activity stretch occupies residues 926–1153; it reads QAMTELSQTL…PASNSSQTTQ (228 aa). 2 disordered regions span residues 1014–1056 and 1125–1173; these read PTSG…ANSA and KKSS…ISKP. Low complexity predominate over residues 1150–1160; that stretch reads QTTQYIITTTT. The span at 1161 to 1173 shows a compositional bias: polar residues; it reads NMNGSSEVHISKP.

Belongs to the class V-like SAM-binding methyltransferase superfamily.

The protein localises to the nucleus. In terms of biological role, transcriptional activator, essential for early embryonic development and survival of embryonic stem cells (ESCs). Supports cell growth and survival during early development by transcriptionally activating the expression of the translation initiation factor EIF3B, to sustain global translation. Activates the transcription of FLNC. The protein is PR domain zinc finger protein 10 (prdm10) of Xenopus tropicalis (Western clawed frog).